Consider the following 1249-residue polypeptide: Minor capsid protein M1249L (1249 aa).

This sequence belongs to the asfivirus M1249L family. Interacts with the minor capsid protein p17 and with the hexon capsid protein p72 capsomers; these interactions form a rigid zipper structure that stabilizes the capsomers. Interacts with host IRF3.

The protein localises to the virion. It is found in the host cytoplasm. Functionally, together with the penton and the other minor capsid proteins (p17, p49), forms a complicated network immediately below the outer capsid shell, stabilizing the whole capsid. In addition, blocks IFN-beta transactivation mediated by the cGAS-STING pathway and regulates the transcriptional activity of IFN-beta. Mechanistically, suppresses the phosphorylation of host key adapter protein TBK1 and degrades host IRF3 in the cytoplasm. The protein is Minor capsid protein M1249L of African swine fever virus (isolate Tick/South Africa/Pretoriuskop Pr4/1996) (ASFV).